Here is a 187-residue protein sequence, read N- to C-terminus: Resolvase OPG149 (187 aa).

It belongs to the RuvC family. Poxviruses-type subfamily. Mg(2+) is required as a cofactor.

Functionally, plays a role in DNA replication by cleaving viral DNA concatamers to yield unit-length viral genomes. The concatamer junctions contain inverted repeat sequences that can be extruded as cruciforms, yielding Holliday junctions that A22 protein cleaves. The protein is Resolvase OPG149 (OPG149) of Vaccinia virus (strain Western Reserve) (VACV).